Reading from the N-terminus, the 276-residue chain is Large ribosomal subunit protein uL2 (276 aa).

Disordered stretches follow at residues 30–52 and 224–257; these read VKGLTEGKNKSGGRNNHGRTTSR and VMNPVDHPHGGGEGRTSGGRHPVTPWGKPTKGYK. The segment covering 41 to 52 has biased composition (polar residues); the sequence is GGRNNHGRTTSR.

Belongs to the universal ribosomal protein uL2 family. As to quaternary structure, part of the 50S ribosomal subunit. Forms a bridge to the 30S subunit in the 70S ribosome.

In terms of biological role, one of the primary rRNA binding proteins. Required for association of the 30S and 50S subunits to form the 70S ribosome, for tRNA binding and peptide bond formation. It has been suggested to have peptidyltransferase activity; this is somewhat controversial. Makes several contacts with the 16S rRNA in the 70S ribosome. This chain is Large ribosomal subunit protein uL2, found in Gluconacetobacter diazotrophicus (strain ATCC 49037 / DSM 5601 / CCUG 37298 / CIP 103539 / LMG 7603 / PAl5).